The sequence spans 346 residues: Short-chain dehydrogenase/reductase bet4 (346 aa).

The disordered stretch occupies residues 1–35; sequence MTPAKAPSHAKKPEAGSQPISSMWTQMFPPKPTYT. The NADP(+) site is built by V56, K80, D105, and N132. S191 (proton donor) is an active-site residue. NADP(+)-binding residues include Y222 and K226. Residue Y222 is the Proton acceptor of the active site. The active-site Lowers pKa of active site Tyr is the K226.

Belongs to the short-chain dehydrogenases/reductases (SDR) family.

The catalysed reaction is dehydroprobetaenone I + AH2 = probetaenone I + A. The protein operates within mycotoxin biosynthesis. In terms of biological role, short-chain dehydrogenase/reductase; part of the gene cluster that mediates the biosynthesis of betaenones, phytotoxic polyketides involved in leaf spot disease in sugar beets. The first step of the pathway is the synthesis of dehydroprobetaenone I by the polyketide synthase bet1 and the enoyl reductase bet3 via condensation of one acetyl-CoA starter unit with 7 malonyl-CoA units and 5 methylations. The C-terminal reductase (R) domain of bet1 catalyzes the reductive release of the polyketide chain. Because bet1 lacks a designated enoylreductase (ER) domain, the required activity is provided the enoyl reductase bet3. The short-chain dehydrogenase/reductase bet4 then catalyzes reduction of dehydroprobetaenone I to probetaenone I. The cytochrome P450 monooxygenase bet2 catalyzes successive epoxidation, oxidation (resulting from epoxide opening) and hydroxylation to install a tertiary alcohol in the decaline ring to yield betaenone C from dehydroprobetaenone I and betaenone B from probetaenone I. The FAD-linked oxidoreductase (orf1) is probably responsible for the conversion of betaenone C to betaenone A via an intramolecular aldol reaction between C-1 and C-17 to form the bridged tricyclic system in betaenone A. The sequence is that of Short-chain dehydrogenase/reductase bet4 from Neocamarosporium betae (Beet black rot fungus).